We begin with the raw amino-acid sequence, 457 residues long: Protein N-terminal amidase (457 aa).

Positions 19–453 constitute a CN hydrolase domain; sequence LKVLVIQLNP…EGAILREVQF (435 aa). Glu-63 (proton acceptor) is an active-site residue. The Proton donor role is filled by Lys-136. Residue Cys-187 is the Nucleophile of the active site.

Belongs to the carbon-nitrogen hydrolase superfamily.

Deamidates N-terminal Asn and Gln. Component of a targeting complex in the N-end rule pathway. The protein is Protein N-terminal amidase (NTA1) of Saccharomyces cerevisiae (strain ATCC 204508 / S288c) (Baker's yeast).